The chain runs to 569 residues: Nucleoprotein (569 aa).

A binding site for the cap structure m7GTP region spans residues 54–241; sequence MRKERRDDND…IDTKKSSLNI (188 aa). Residues D389 and E391 each contribute to the Mn(2+) site. Residues E399, C506, H509, and C529 each contribute to the Zn(2+) site. D533 is a binding site for Mn(2+).

The protein belongs to the arenaviridae nucleocapsid protein family. As to quaternary structure, homomultimerizes to form the nucleocapsid. Binds to viral genomic RNA. Interacts with glycoprotein G2. Interacts with protein Z; this interaction probably directs the encapsidated genome to budding sites. Interacts with protein L; this interaction does not interfere with Z-L interaction. Interacts with host IKBKE (via Protein kinase domain); the interaction inhibits IKBKE kinase activity.

Its subcellular location is the virion. It is found in the host cytoplasm. Encapsidates the genome, protecting it from nucleases. The encapsidated genomic RNA is termed the nucleocapsid (NC). Serves as template for viral transcription and replication. The increased presence of protein N in host cell does not seem to trigger the switch from transcription to replication as observed in other negative strain RNA viruses. Through the interaction with host IKBKE, strongly inhibits the phosphorylation and nuclear translocation of host IRF3, a protein involved in interferon activation pathway, leading to the inhibition of interferon-beta and IRF3-dependent promoters activation. Also encodes a functional 3'-5' exoribonuclease that degrades preferentially dsRNA substrates and thereby participates in the suppression of interferon induction. The sequence is that of Nucleoprotein from Lassa virus (strain Mouse/Sierra Leone/Josiah/1976) (LASV).